A 456-amino-acid chain; its full sequence is Bifunctional protein GlmU (456 aa).

Residues 1–229 (MLNNAMSVVI…LSEVEGVNNR (229 aa)) are pyrophosphorylase. UDP-N-acetyl-alpha-D-glucosamine is bound by residues 11-14 (LAAG), Lys25, Gln76, 81-82 (GT), 103-105 (YGD), Gly140, Glu154, Asn169, and Asn227. A Mg(2+)-binding site is contributed by Asp105. Asn227 is a Mg(2+) binding site. Positions 230–250 (LQLSRLERVYQSEQAEKLLLA) are linker. An N-acetyltransferase region spans residues 251 to 456 (GVMLRDPARF…EGWRRPVKKK (206 aa)). Residues Arg333 and Lys351 each contribute to the UDP-N-acetyl-alpha-D-glucosamine site. Residue His363 is the Proton acceptor of the active site. 2 residues coordinate UDP-N-acetyl-alpha-D-glucosamine: Tyr366 and Asn377. Acetyl-CoA contacts are provided by residues Ala380, 386-387 (NY), Ser405, Ala423, and Arg440.

The protein in the N-terminal section; belongs to the N-acetylglucosamine-1-phosphate uridyltransferase family. In the C-terminal section; belongs to the transferase hexapeptide repeat family. Homotrimer. Mg(2+) is required as a cofactor.

It is found in the cytoplasm. The catalysed reaction is alpha-D-glucosamine 1-phosphate + acetyl-CoA = N-acetyl-alpha-D-glucosamine 1-phosphate + CoA + H(+). The enzyme catalyses N-acetyl-alpha-D-glucosamine 1-phosphate + UTP + H(+) = UDP-N-acetyl-alpha-D-glucosamine + diphosphate. It functions in the pathway nucleotide-sugar biosynthesis; UDP-N-acetyl-alpha-D-glucosamine biosynthesis; N-acetyl-alpha-D-glucosamine 1-phosphate from alpha-D-glucosamine 6-phosphate (route II): step 2/2. The protein operates within nucleotide-sugar biosynthesis; UDP-N-acetyl-alpha-D-glucosamine biosynthesis; UDP-N-acetyl-alpha-D-glucosamine from N-acetyl-alpha-D-glucosamine 1-phosphate: step 1/1. Its pathway is bacterial outer membrane biogenesis; LPS lipid A biosynthesis. Its function is as follows. Catalyzes the last two sequential reactions in the de novo biosynthetic pathway for UDP-N-acetylglucosamine (UDP-GlcNAc). The C-terminal domain catalyzes the transfer of acetyl group from acetyl coenzyme A to glucosamine-1-phosphate (GlcN-1-P) to produce N-acetylglucosamine-1-phosphate (GlcNAc-1-P), which is converted into UDP-GlcNAc by the transfer of uridine 5-monophosphate (from uridine 5-triphosphate), a reaction catalyzed by the N-terminal domain. This Escherichia coli O127:H6 (strain E2348/69 / EPEC) protein is Bifunctional protein GlmU.